The following is a 607-amino-acid chain: MEATSVFRPKLGSQFSLPSTTNLFPLRKLYGFPLTSFPGKPIKRIRLKATNTLTFDDKERTRKFKKLPLSEWTHYFHSIPLDISEMDALKEEIDELKPKVKNTFMSSQGSDSTKTKILMIYLFVSLGLAYHFEEEIYETLKEGFENIEKIMAGEEDLYTVSIIFWVFRRYGHYISSDVFQRFKGSNGSFKESLIGDAKGMLSLYEAAHLATTKDYILDEALIFTSSHLETLVATGTCPPHLLARIRNALSICQHWNFEVLVPLDFIPFYEQEKDHDEMLLKFAKLSFKYLKLIYLQDLKILTKWYKKLDFPSKFPPYFKDRCVENYFFVLPVFFEPQLSSARMLLTKGFILLGIQDDTFDRYASISEAESLGNSLKRWAPDHSMDKQPEYLKSVLKVILDTFQEFEKELSPEGRSYSVKYTIEEFQASSKANVELAKWAQVSHVPSFEKYMEVGQMEITACVTVAYILMSMGKTGTKEAFEWLKSRPKLVQSLCTKGRLMNDIAGFEDDMSRGYVVNAVNCYMKQYGVTEKEAFKELRKMVVNTHKTLNEEFLTTTCVSHYVLRETMDFARMIIVTYNGYEGFTRPDEGKIEEYMTSLFVDHTLKML.

Mg(2+)-binding residues include Asp-356, Asp-360, Asn-501, and Asp-509. Positions 356–360 match the DDXXD motif motif; the sequence is DDTFD.

This sequence belongs to the terpene synthase family. Tpsa subfamily. Mg(2+) is required as a cofactor. It depends on Mn(2+) as a cofactor. As to expression, predominantly expressed in roots but also in stems, leaves and flowers.

The protein localises to the cytoplasm. It functions in the pathway secondary metabolite biosynthesis; terpenoid biosynthesis. Involved in terpene biosynthesis in roots. Possesses diterpene (C20) synthase activity in vitro. Does not seem to be involved in sesquiterpene (C15) biosynthesis. The sequence is that of Terpenoid synthase 9 from Arabidopsis thaliana (Mouse-ear cress).